The chain runs to 154 residues: Myoglobin (154 aa).

The region spanning 2 to 148 (GLSDGEWQSV…FRNDIAAKYK (147 aa)) is the Globin domain. Phosphoserine is present on Ser4. Residue His65 coordinates nitrite. His65 is an O2 binding site. Thr68 is modified (phosphothreonine). His94 contacts heme b.

It belongs to the globin family. As to quaternary structure, monomeric.

Its subcellular location is the cytoplasm. The protein resides in the sarcoplasm. It carries out the reaction Fe(III)-heme b-[protein] + nitric oxide + H2O = Fe(II)-heme b-[protein] + nitrite + 2 H(+). It catalyses the reaction H2O2 + AH2 = A + 2 H2O. In terms of biological role, monomeric heme protein which primary function is to store oxygen and facilitate its diffusion within muscle tissues. Reversibly binds oxygen through a pentacoordinated heme iron and enables its timely and efficient release as needed during periods of heightened demand. Depending on the oxidative conditions of tissues and cells, and in addition to its ability to bind oxygen, it also has a nitrite reductase activity whereby it regulates the production of bioactive nitric oxide. Under stress conditions, like hypoxia and anoxia, it also protects cells against reactive oxygen species thanks to its pseudoperoxidase activity. The polypeptide is Myoglobin (MB) (Perodicticus potto edwarsi (Potto)).